We begin with the raw amino-acid sequence, 259 residues long: Ribosomal RNA large subunit methyltransferase E (259 aa).

Residues glycine 49, tryptophan 51, aspartate 69, aspartate 88, and aspartate 112 each contribute to the S-adenosyl-L-methionine site. The active-site Proton acceptor is the lysine 152. The TRAM domain maps to 199 to 257 (PIAEGDEHTVEIVDTGDEGDGIARIEGYTLFVDDAAEGDTVDVTVTDLKPNYGFAERRD).

The protein belongs to the class I-like SAM-binding methyltransferase superfamily. RNA methyltransferase RlmE family.

The protein resides in the cytoplasm. The catalysed reaction is uridine(2552) in 23S rRNA + S-adenosyl-L-methionine = 2'-O-methyluridine(2552) in 23S rRNA + S-adenosyl-L-homocysteine + H(+). In terms of biological role, specifically methylates the uridine in position 2552 of 23S rRNA at the 2'-O position of the ribose in the fully assembled 50S ribosomal subunit. The protein is Ribosomal RNA large subunit methyltransferase E of Halobacterium salinarum (strain ATCC 29341 / DSM 671 / R1).